A 2201-amino-acid polypeptide reads, in one-letter code: Tenascin (2201 aa).

A signal peptide spans 1–22 (MGAMTQLLAGVFLAFLALATEG). Residue asparagine 38 is glycosylated (N-linked (GlcNAc...) asparagine). Serine 65 and serine 70 each carry phosphoserine. Serine 72 is modified (phosphoserine; by FAM20C). An O-linked (Xyl...) (chondroitin sulfate) serine glycan is attached at serine 72. Positions 118-145 (DVKELLSRLEELENLVSSLREQCTAGAG) form a coiled coil. 2 N-linked (GlcNAc...) asparagine glycosylation sites follow: asparagine 166 and asparagine 184. An EGF-like 1; incomplete domain is found at 174–186 (CVCEPGWKGPNCS). EGF-like domains lie at 186-217 (SEPE…EDCS), 217-248 (SQLA…ADCS), 248-280 (SREI…DDCN), 280-311 (NKPL…EDCS), 311-342 (SELI…EDCG), 342-373 (GKPT…VDCS), 373-404 (SEKR…ADCG), 404-435 (GELK…EDCS), 435-466 (SQLR…YDCS), 466-497 (SDMS…EDCR), 497-528 (RDRQ…PDCA), 528-559 (AELS…KDCK), 559-590 (KEQR…LDCG), and 590-621 (GQHS…EDCS). 42 disulfides stabilise this stretch: cysteine 190–cysteine 200, cysteine 194–cysteine 205, cysteine 207–cysteine 216, cysteine 221–cysteine 231, cysteine 225–cysteine 236, cysteine 238–cysteine 247, cysteine 252–cysteine 263, cysteine 256–cysteine 268, cysteine 270–cysteine 279, cysteine 284–cysteine 294, cysteine 288–cysteine 299, cysteine 301–cysteine 310, cysteine 315–cysteine 325, cysteine 319–cysteine 330, cysteine 332–cysteine 341, cysteine 346–cysteine 356, cysteine 350–cysteine 361, cysteine 363–cysteine 372, cysteine 377–cysteine 387, cysteine 381–cysteine 392, cysteine 394–cysteine 403, cysteine 408–cysteine 418, cysteine 412–cysteine 423, cysteine 425–cysteine 434, cysteine 439–cysteine 449, cysteine 443–cysteine 454, cysteine 456–cysteine 465, cysteine 470–cysteine 480, cysteine 474–cysteine 485, cysteine 487–cysteine 496, cysteine 501–cysteine 511, cysteine 505–cysteine 516, cysteine 518–cysteine 527, cysteine 532–cysteine 542, cysteine 536–cysteine 547, cysteine 549–cysteine 558, cysteine 563–cysteine 573, cysteine 567–cysteine 578, cysteine 580–cysteine 589, cysteine 594–cysteine 604, cysteine 598–cysteine 609, and cysteine 611–cysteine 620. A glycan (N-linked (GlcNAc...) asparagine) is linked at asparagine 327. 15 consecutive Fibronectin type-III domains span residues 625-715 (PPKD…LPAP), 716-804 (EGLK…TRLD), 805-894 (APSQ…TGLD), 895-990 (APRN…TPKD), 991-1075 (LQVS…EQAP), 1076-1165 (ELEN…TGET), 1167-1256 (NLGE…TEEV), 1258-1350 (DMGN…LPQL), 1351-1439 (GDLA…AKEP), 1440-1531 (EIGN…ALPL), 1533-1621 (ENLT…EAEP), 1622-1711 (EVDN…TAMG), 1712-1801 (SPKE…ALDG), 1802-1888 (PSGL…TDLD), and 1889-1977 (SPRD…IGLL). The N-linked (GlcNAc...) asparagine glycan is linked to asparagine 788. A Phosphothreonine modification is found at threonine 905. Asparagine 1018, asparagine 1034, asparagine 1079, asparagine 1093, asparagine 1119, asparagine 1184, asparagine 1210, asparagine 1261, asparagine 1275, asparagine 1301, asparagine 1366, asparagine 1392, asparagine 1445, asparagine 1455, asparagine 1485, and asparagine 1534 each carry an N-linked (GlcNAc...) asparagine glycan. Asparagine 1809 is a glycosylation site (N-linked (GlcNAc...) asparagine). The 216-residue stretch at 1975 to 2190 (GLLYPFPKDC…FAEMKLRPSN (216 aa)) folds into the Fibrinogen C-terminal domain. Residue asparagine 2162 is glycosylated (N-linked (GlcNAc...) asparagine).

The protein belongs to the tenascin family. In terms of assembly, homohexamer; disulfide-linked. A homotrimer may be formed in the triple coiled-coil region and may be stabilized by disulfide rings at both ends. Two of such half-hexabrachions may be disulfide linked within the central globule. Interacts with CSPG4. Interacts (via the 3rd fibronectin type-III domain) with integrin ITGA9:ITGB1. As to expression, detected in fibroblasts (at protein level).

It localises to the secreted. The protein resides in the extracellular space. The protein localises to the extracellular matrix. Functionally, extracellular matrix protein implicated in guidance of migrating neurons as well as axons during development, synaptic plasticity as well as neuronal regeneration. Promotes neurite outgrowth from cortical neurons grown on a monolayer of astrocytes. Ligand for integrins alpha-8/beta-1, alpha-9/beta-1, alpha-V/beta-3 and alpha-V/beta-6. In tumors, stimulates angiogenesis by elongation, migration and sprouting of endothelial cells. This Homo sapiens (Human) protein is Tenascin (TNC).